We begin with the raw amino-acid sequence, 398 residues long: Carbamoyl phosphate synthase small chain (398 aa).

The segment at 1 to 199 is CPSase; the sequence is MTPAWATEKP…WNEGFGEQAE (199 aa). 3 residues coordinate L-glutamine: Ser54, Gly251, and Gly253. Positions 203–391 constitute a Glutamine amidotransferase type-1 domain; sequence HVVAIDYGVK…VNLIREKRGE (189 aa). Residue Cys280 is the Nucleophile of the active site. Positions 281, 284, 322, 324, and 325 each coordinate L-glutamine. Active-site residues include His364 and Glu366.

Belongs to the CarA family. As to quaternary structure, composed of two chains; the small (or glutamine) chain promotes the hydrolysis of glutamine to ammonia, which is used by the large (or ammonia) chain to synthesize carbamoyl phosphate. Tetramer of heterodimers (alpha,beta)4.

It catalyses the reaction hydrogencarbonate + L-glutamine + 2 ATP + H2O = carbamoyl phosphate + L-glutamate + 2 ADP + phosphate + 2 H(+). The enzyme catalyses L-glutamine + H2O = L-glutamate + NH4(+). It functions in the pathway amino-acid biosynthesis; L-arginine biosynthesis; carbamoyl phosphate from bicarbonate: step 1/1. Its pathway is pyrimidine metabolism; UMP biosynthesis via de novo pathway; (S)-dihydroorotate from bicarbonate: step 1/3. Small subunit of the glutamine-dependent carbamoyl phosphate synthetase (CPSase). CPSase catalyzes the formation of carbamoyl phosphate from the ammonia moiety of glutamine, carbonate, and phosphate donated by ATP, constituting the first step of 2 biosynthetic pathways, one leading to arginine and/or urea and the other to pyrimidine nucleotides. The small subunit (glutamine amidotransferase) binds and cleaves glutamine to supply the large subunit with the substrate ammonia. In Mesorhizobium japonicum (strain LMG 29417 / CECT 9101 / MAFF 303099) (Mesorhizobium loti (strain MAFF 303099)), this protein is Carbamoyl phosphate synthase small chain.